Reading from the N-terminus, the 37-residue chain is Photosystem II reaction center protein T (37 aa).

The helical transmembrane segment at Ala-3–Phe-23 threads the bilayer.

The protein belongs to the PsbT family. In terms of assembly, PSII is composed of 1 copy each of membrane proteins PsbA, PsbB, PsbC, PsbD, PsbE, PsbF, PsbH, PsbI, PsbJ, PsbK, PsbL, PsbM, PsbT, PsbY, PsbZ, Psb30/Ycf12, at least 3 peripheral proteins of the oxygen-evolving complex and a large number of cofactors. It forms dimeric complexes.

It localises to the plastid. It is found in the chloroplast thylakoid membrane. Functionally, found at the monomer-monomer interface of the photosystem II (PS II) dimer, plays a role in assembly and dimerization of PSII. PSII is a light-driven water plastoquinone oxidoreductase, using light energy to abstract electrons from H(2)O, generating a proton gradient subsequently used for ATP formation. This chain is Photosystem II reaction center protein T, found in Cucumis sativus (Cucumber).